The following is a 364-amino-acid chain: Autophagy-related protein 14 (364 aa).

The tract at residues 5–20 is cysteine repeats; sequence CPICETQSHVFYCAHC. A coiled-coil region spans residues 38–114; that stretch reads LGKINNALRN…QDRRIKEKSR (77 aa).

The protein belongs to the ATG14 family. As to quaternary structure, component of the autophagy-specific VPS34 PI3-kinase complex I composed of VPS15, VPS30, VPS34, ATG14 and ATG38. Interacts directly with ATG38.

The protein localises to the preautophagosomal structure membrane. It is found in the vacuole membrane. Required for cytoplasm to vacuole transport (Cvt) and autophagy as a part of the autophagy-specific VPS34 PI3-kinase complex I. This complex is essential to recruit the ATG8-phosphatidylinositol conjugate and the ATG12-ATG5 conjugate to the pre-autophagosomal structure. ATG14 mediates the specific binding of the VPS34 PI3-kinase complex I to the preautophagosomal structure (PAS). Required for survival and/or proliferation in kidneys and in brain. The chain is Autophagy-related protein 14 from Candida glabrata (strain ATCC 2001 / BCRC 20586 / JCM 3761 / NBRC 0622 / NRRL Y-65 / CBS 138) (Yeast).